The sequence spans 230 residues: 5'-methylthioadenosine/S-adenosylhomocysteine nucleosidase (230 aa).

The Proton acceptor role is filled by Glu12. Substrate is bound by residues Gly78, Ile153, and 174 to 175 (ME). Asp198 acts as the Proton donor in catalysis.

This sequence belongs to the PNP/UDP phosphorylase family. MtnN subfamily.

It catalyses the reaction S-adenosyl-L-homocysteine + H2O = S-(5-deoxy-D-ribos-5-yl)-L-homocysteine + adenine. The catalysed reaction is S-methyl-5'-thioadenosine + H2O = 5-(methylsulfanyl)-D-ribose + adenine. It carries out the reaction 5'-deoxyadenosine + H2O = 5-deoxy-D-ribose + adenine. It participates in amino-acid biosynthesis; L-methionine biosynthesis via salvage pathway; S-methyl-5-thio-alpha-D-ribose 1-phosphate from S-methyl-5'-thioadenosine (hydrolase route): step 1/2. Functionally, catalyzes the irreversible cleavage of the glycosidic bond in both 5'-methylthioadenosine (MTA) and S-adenosylhomocysteine (SAH/AdoHcy) to adenine and the corresponding thioribose, 5'-methylthioribose and S-ribosylhomocysteine, respectively. Also cleaves 5'-deoxyadenosine, a toxic by-product of radical S-adenosylmethionine (SAM) enzymes, into 5-deoxyribose and adenine. The protein is 5'-methylthioadenosine/S-adenosylhomocysteine nucleosidase of Shewanella sediminis (strain HAW-EB3).